The sequence spans 269 residues: Phosphate import ATP-binding protein PstB 2 (269 aa).

Positions 22-264 (LSTNDLRVFY…PSLQSTEDYV (243 aa)) constitute an ABC transporter domain. 55–62 (GPSGSGKS) contacts ATP.

This sequence belongs to the ABC transporter superfamily. Phosphate importer (TC 3.A.1.7) family. As to quaternary structure, the complex is composed of two ATP-binding proteins (PstB), two transmembrane proteins (PstC and PstA) and a solute-binding protein (PstS).

It localises to the cell membrane. The catalysed reaction is phosphate(out) + ATP + H2O = ADP + 2 phosphate(in) + H(+). Functionally, part of the ABC transporter complex PstSACB involved in phosphate import. Responsible for energy coupling to the transport system. The polypeptide is Phosphate import ATP-binding protein PstB 2 (Lactococcus lactis subsp. lactis (strain IL1403) (Streptococcus lactis)).